Reading from the N-terminus, the 2333-residue chain is Genome polyprotein (2333 aa).

A Peptidase C28 domain is found at methionine 1–lysine 201. The Cytoplasmic segment spans residues methionine 1 to leucine 1481. Catalysis depends on for leader protease activity residues cysteine 51, histidine 148, and aspartate 163. Disordered stretches follow at residues lysine 199–asparagine 218 and glutamine 238–asparagine 265. A lipid anchor (N-myristoyl glycine; by host) is attached at glycine 202. Polar residues-rich tracts occupy residues glycine 204–asparagine 218 and glutamine 238–glycine 251. A compositionally biased stretch (low complexity) spans serine 252–asparagine 265. An antigenic epitope region spans residues alanine 789–tyrosine 797. Positions arginine 869–aspartate 871 match the Cell attachment site motif. The SF3 helicase domain maps to asparagine 1190–aspartate 1354. ATP is bound at residue glycine 1218–serine 1225. The stretch at lysine 1482–isoleucine 1502 is an intramembrane region. At arginine 1503–alanine 2333 the chain is on the cytoplasmic side. Residues asparagine 1562 to glutamine 1589 are disordered. O-(5'-phospho-RNA)-tyrosine is present on residues tyrosine 1582, tyrosine 1605, and tyrosine 1629. In terms of domain architecture, Peptidase C3 spans alanine 1653 to leucine 1849. The For protease 3C activity; Proton donor/acceptor role is filled by histidine 1696. Catalysis depends on for protease 3C activity residues aspartate 1734 and cysteine 1813. Residues methionine 1879–threonine 1887 carry the Nuclear localization signal motif. The RdRp catalytic domain occupies arginine 2097 to alanine 2215. The active-site For RdRp activity is glycine 2200.

Belongs to the picornaviruses polyprotein family. Interacts with host ISG15. As to quaternary structure, interacts (via R-G-D motif) with host ITGAV/ITGB6. Interacts with host MAVS; this interaction inhibits binding of host TRAF3 to MAVS, thereby suppressing interferon-mediated responses. In terms of assembly, forms homooligomers. Homohexamer. Interacts with host VIM. Interacts with host BECN1. As to quaternary structure, interacts with host DCTN3. In terms of assembly, interacts with RNA-dependent RNA polymerase; this interaction allows 3B-1 to binds 2 polymerases and act as a primer. It also allows the recruitment of the RNA-dependent RNA polymerase to host membranes. Interacts with RNA-dependent RNA polymerase; this interaction allows 3B-2 to act as a primer. As to quaternary structure, interacts with RNA-dependent RNA polymerase; this interaction allows 3B-3 to act as a primer. In terms of assembly, interacts with 3B-1; this interaction allows 3B-1 to binds 2 polymerases and act as a primer. It also allows the recruitment of the RNA-dependent RNA polymerase to host membranes. Interacts with 3B-2; this interaction allows 3B-2 to act as a primer. Interacts with 3B-3; this interaction allows 3B-3 to act as a primer. In terms of processing, removes six residues from its own C-terminus, generating sLb(pro). Post-translationally, specific enzymatic cleavages in vivo by the viral proteases yield a variety of precursors and mature proteins. The polyprotein seems to be cotranslationally cleaved at the 2A/2B junction by a ribosomal skip from one codon to the next without formation of a peptide bond. This process would release the L-P1-2A peptide from the translational complex. During virion maturation, immature virions are rendered infectious following cleavage of VP0 into VP4 and VP2. This maturation seems to be an autocatalytic event triggered by the presence of RNA in the capsid and is followed by a conformational change of the particle. In terms of processing, myristoylation is required during RNA encapsidation and formation of the mature virus particle. Post-translationally, uridylylated by the polymerase and covalently linked to the 5'-end of genomic RNA. These uridylylated forms act as a nucleotide-peptide primer for the polymerase.

Its subcellular location is the host nucleus. It localises to the host cytoplasm. The protein resides in the virion. It is found in the host endoplasmic reticulum membrane. The protein localises to the host cytoplasmic vesicle membrane. The catalysed reaction is Autocatalytically cleaves itself from the polyprotein of the foot-and-mouth disease virus by hydrolysis of a Lys-|-Gly bond, but then cleaves host cell initiation factor eIF-4G at bonds -Gly-|-Arg- and -Lys-|-Arg-.. The enzyme catalyses a ribonucleoside 5'-triphosphate + H2O = a ribonucleoside 5'-diphosphate + phosphate + H(+). It catalyses the reaction RNA(n) + a ribonucleoside 5'-triphosphate = RNA(n+1) + diphosphate. It carries out the reaction Selective cleavage of Gln-|-Gly bond in the poliovirus polyprotein. In other picornavirus reactions Glu may be substituted for Gln, and Ser or Thr for Gly.. In terms of biological role, autocatalytically cleaves itself from the polyprotein at the L/VP0 junction. Also cleaves the host translation initiation factors EIF4G1 and EIF4G3, in order to shut off the capped cellular mRNA transcription. Plays a role in counteracting host innate antiviral response using diverse mechanisms. Possesses a deubiquitinase activity acting on both 'Lys-48' and 'Lys-63'-linked polyubiquitin chains. In turn, inhibits the ubiquitination and subsequent activation of key signaling molecules of type I IFN response such as host RIGI, TBK1, TRAF3 and TRAF6. Inhibits host NF-kappa-B activity by inducing a decrease in RELA mRNA levels. Cleaves a peptide bond in the C-terminus of host ISG15, resulting in the damaging of this modifier that can no longer be attached to target proteins. Also cleaves host G3BP1 and G3BP2 in order to inhibit cytoplasmic stress granules assembly. Functionally, lies on the inner surface of the capsid shell. After binding to the host receptor, the capsid undergoes conformational changes. Capsid protein VP4 is released, capsid protein VP1 N-terminus is externalized, and together, they shape a pore in the host membrane through which the viral genome is translocated into the host cell cytoplasm. After genome has been released, the channel shrinks. Its function is as follows. Forms an icosahedral capsid of pseudo T=3 symmetry with capsid proteins VP1 and VP3. The capsid is composed of 60 copies of each capsid protein organized in the form of twelve pentamers and encloses the viral positive strand RNA genome. Upon acidifcation in the endosome, dissociates into pentamers. Forms an icosahedral capsid of pseudo T=3 symmetry with capsid proteins VP0 and VP3. The capsid is composed of 60 copies of each capsid protein organized in the form of twelve pentamers and encloses the viral positive strand RNA genome. Upon acidifcation in the endosome, dissociates into pentamers. In terms of biological role, forms an icosahedral capsid of pseudo T=3 symmetry with capsid proteins VP2 and VP3. The capsid is composed of 60 copies of each capsid protein organized in the form of twelve pentamers and encloses the viral positive strand RNA genome. Mediates cell entry by attachment to an integrin receptor, usually host ITGAV/ITGB6. In addition, targets host MAVS to suppress type I IFN pathway. Upon acidifcation in the endosome, dissociates into pentamers. Functionally, mediates self-processing of the polyprotein by a translational effect termed 'ribosome skipping'. Mechanistically, 2A-mediated cleavage occurs between the C-terminal glycine and the proline of the downstream protein 2B. In the case of foot-and-mouth disease virus, the 2A oligopeptide is post-translationally 'trimmed' from the C-terminus of the upstream protein 1D by 3C proteinase. Its function is as follows. Plays an essential role in the virus replication cycle by acting as a viroporin. Creates a pore in the host endoplasmic reticulum and as a consequence releases Ca2+ in the cytoplasm of infected cell. In turn, high levels of cytoplasmic calcium may trigger membrane trafficking and transport of viral ER-associated proteins to viroplasms, sites of viral genome replication. Associates with and induces structural rearrangements of intracellular membranes. Triggers host autophagy by interacting with host BECN1 and thereby promotes viral replication. Participates in viral replication and interacts with host DHX9. Displays RNA-binding, nucleotide binding and NTPase activities. May play a role in virion morphogenesis and viral RNA encapsidation by interacting with the capsid protein VP3. In terms of biological role, plays important roles in virus replication, virulence and host range. Functionally, covalently linked to the 5'-end of both the positive-strand and negative-strand genomic RNAs. Acts as a genome-linked replication primer. Its function is as follows. Cysteine protease that generates mature viral proteins from the precursor polyprotein. In addition to its proteolytic activity, binds to viral RNA and thus influences viral genome replication. RNA and substrate bind cooperatively to the protease. RNA-directed RNA polymerase 3D-POL replicates genomic and antigenomic RNA by recognizing replications specific signals. Covalently attaches UMP to a tyrosine of VPg, which is used to prime RNA synthesis. The positive stranded RNA genome is first replicated at virus induced membranous vesicles, creating a dsRNA genomic replication form. This dsRNA is then used as template to synthesize positive stranded RNA genomes. ss(+)RNA genomes are either translated, replicated or encapsidated. The protein is Genome polyprotein of Foot-and-mouth disease virus (isolate Bovine/United Kingdom/A12Valle119/1932 serotype A) (FMDV).